A 185-amino-acid chain; its full sequence is Translation initiation factor IF-3 (185 aa).

This sequence belongs to the IF-3 family. As to quaternary structure, monomer.

It localises to the cytoplasm. Functionally, IF-3 binds to the 30S ribosomal subunit and shifts the equilibrium between 70S ribosomes and their 50S and 30S subunits in favor of the free subunits, thus enhancing the availability of 30S subunits on which protein synthesis initiation begins. The polypeptide is Translation initiation factor IF-3 (Bacteroides thetaiotaomicron (strain ATCC 29148 / DSM 2079 / JCM 5827 / CCUG 10774 / NCTC 10582 / VPI-5482 / E50)).